The primary structure comprises 247 residues: Protein AC124 (247 aa).

It localises to the host cytoplasm. It is found in the host nucleus. In terms of biological role, accelerates mortality in insect larvae. The protein is Protein AC124 of Lepidoptera (butterflies and moths).